The chain runs to 326 residues: GDP-mannose transporter (326 aa).

At 1 to 4 (MEKS) the chain is on the cytoplasmic side. Residues 5–25 (ITNSPVLSILSYCAASILMTV) traverse the membrane as a helical segment. Topologically, residues 26–35 (TNKYVLSGTS) are lumenal. Residues 36 to 56 (FNLNLALLAVQSIVCLTAISI) traverse the membrane as a helical segment. The Cytoplasmic portion of the chain corresponds to 57–74 (GKSFGLCKFRSFNADEAK). Residues 75 to 97 (KWFPIALLLVVMIYTSSKALQFL) traverse the membrane as a helical segment. Residues 98 to 100 (SIP) are Lumenal-facing. Residues 101–123 (VYTIFKNLTIILIAYGEVLWFGG) form a helical membrane-spanning segment. The Cytoplasmic portion of the chain corresponds to 124–129 (SVTSMA). Residues 130-152 (LASFVLMVLSSVIAAWSDISGAI) form a helical membrane-spanning segment. Residues 153–163 (AVSGSATTTVT) are Lumenal-facing. Residues 164 to 184 (ALNIGYFWMMSNCFASAAFVL) traverse the membrane as a helical segment. Residues 185 to 208 (YMRKRIKLTNFGDFDTTFYNNLLS) lie on the Cytoplasmic side of the membrane. The helical transmembrane segment at 209–229 (IPVLLIASLLFEDWSPANLAV) threads the bilayer. Residues 230 to 237 (NFPPESRN) lie on the Lumenal side of the membrane. A helical membrane pass occupies residues 238–258 (LIFFSMVVSGLMSIGISYCSA). Topologically, residues 259-268 (WCVRVTSSTT) are cytoplasmic. Residues 269–289 (YSMVGALNKLPLALSGIVFFG) form a helical membrane-spanning segment. Topologically, residues 290–291 (TP) are lumenal. Residues 292–312 (ATFSSVSAIFVGFVAGIVYAV) form a helical membrane-spanning segment. At 313–326 (AQIQKKKAEAALPK) the chain is on the cytoplasmic side.

This sequence belongs to the TPT transporter family. SLC35D subfamily. Homooligomer.

It is found in the golgi apparatus membrane. The protein resides in the cytoplasmic vesicle membrane. The protein localises to the endoplasmic reticulum membrane. Its function is as follows. Involved in the import of GDP-mannose from the cytoplasm into the Golgi lumen. The sequence is that of GDP-mannose transporter (VRG4) from Yarrowia lipolytica (strain CLIB 122 / E 150) (Yeast).